The chain runs to 747 residues: AMP deaminase 1 (747 aa).

At Thr81 the chain carries Phosphothreonine. Ser85 is subject to Phosphoserine. Residue Tyr216 is modified to Phosphotyrosine. 2 residues coordinate Zn(2+): His303 and His305. Substrate contacts are provided by residues His305 and 374–379 (KFNDKY). Ser441 bears the Phosphoserine mark. Zn(2+) is bound at residue His572. Position 575 (Glu575) interacts with substrate. Catalysis depends on His594, which acts as the Proton acceptor. Zn(2+) is bound at residue Asp649. 650–653 (DPMQ) lines the substrate pocket.

This sequence belongs to the metallo-dependent hydrolases superfamily. Adenosine and AMP deaminases family. As to quaternary structure, homotetramer. It depends on Zn(2+) as a cofactor.

The enzyme catalyses AMP + H2O + H(+) = IMP + NH4(+). Its pathway is purine metabolism; IMP biosynthesis via salvage pathway; IMP from AMP: step 1/1. Its function is as follows. AMP deaminase plays a critical role in energy metabolism. The protein is AMP deaminase 1 of Homo sapiens (Human).